The following is a 387-amino-acid chain: Testis-expressed protein 9 (387 aa).

Disordered stretches follow at residues M1–G25 and R58–P133. Polar residues-rich tracts occupy residues A70–G91 and K103–L115. The stretch at I184–G347 forms a coiled coil.

Testis-specific.

It localises to the cytoplasm. The protein localises to the cytoskeleton. Its subcellular location is the microtubule organizing center. The protein resides in the centrosome. It is found in the centriolar satellite. This Mus musculus (Mouse) protein is Testis-expressed protein 9 (Tex9).